Reading from the N-terminus, the 205-residue chain is Methylthioribulose-1-phosphate dehydratase (205 aa).

Zn(2+)-binding residues include His-95 and His-97.

The protein belongs to the aldolase class II family. MtnB subfamily. It depends on Zn(2+) as a cofactor.

The catalysed reaction is 5-(methylsulfanyl)-D-ribulose 1-phosphate = 5-methylsulfanyl-2,3-dioxopentyl phosphate + H2O. The protein operates within amino-acid biosynthesis; L-methionine biosynthesis via salvage pathway; L-methionine from S-methyl-5-thio-alpha-D-ribose 1-phosphate: step 2/6. Catalyzes the dehydration of methylthioribulose-1-phosphate (MTRu-1-P) into 2,3-diketo-5-methylthiopentyl-1-phosphate (DK-MTP-1-P). This chain is Methylthioribulose-1-phosphate dehydratase, found in Microcystis aeruginosa (strain NIES-843 / IAM M-2473).